Here is a 200-residue protein sequence, read N- to C-terminus: Protein GrpE (200 aa).

A disordered region spans residues 15–47 (DLEMDLNEEELEESEVNEDKEFEELDKSEEENE). The span at 16–47 (LEMDLNEEELEESEVNEDKEFEELDKSEEENE) shows a compositional bias: acidic residues.

It belongs to the GrpE family. Homodimer.

It is found in the cytoplasm. Functionally, participates actively in the response to hyperosmotic and heat shock by preventing the aggregation of stress-denatured proteins, in association with DnaK and GrpE. It is the nucleotide exchange factor for DnaK and may function as a thermosensor. Unfolded proteins bind initially to DnaJ; upon interaction with the DnaJ-bound protein, DnaK hydrolyzes its bound ATP, resulting in the formation of a stable complex. GrpE releases ADP from DnaK; ATP binding to DnaK triggers the release of the substrate protein, thus completing the reaction cycle. Several rounds of ATP-dependent interactions between DnaJ, DnaK and GrpE are required for fully efficient folding. This chain is Protein GrpE, found in Clostridium tetani (strain Massachusetts / E88).